A 414-amino-acid chain; its full sequence is Na(+)-translocating NADH-quinone reductase subunit B (414 aa).

Transmembrane regions (helical) follow at residues W23–V40, I56–G76, F129–M149, and I164–T184. T236 bears the FMN phosphoryl threonine mark. The next 5 helical transmembrane spans lie at I268–V288, I297–S317, M322–F342, W358–Y378, and G381–V401.

The protein belongs to the NqrB/RnfD family. Composed of six subunits; NqrA, NqrB, NqrC, NqrD, NqrE and NqrF. Requires FMN as cofactor.

The protein localises to the cell inner membrane. It catalyses the reaction a ubiquinone + n Na(+)(in) + NADH + H(+) = a ubiquinol + n Na(+)(out) + NAD(+). Its function is as follows. NQR complex catalyzes the reduction of ubiquinone-1 to ubiquinol by two successive reactions, coupled with the transport of Na(+) ions from the cytoplasm to the periplasm. NqrA to NqrE are probably involved in the second step, the conversion of ubisemiquinone to ubiquinol. This Vibrio vulnificus (strain CMCP6) protein is Na(+)-translocating NADH-quinone reductase subunit B.